We begin with the raw amino-acid sequence, 433 residues long: Serine--tRNA ligase (433 aa).

Position 235 to 237 (235 to 237 (TSE)) interacts with L-serine. Residue 266 to 268 (RSE) coordinates ATP. An L-serine-binding site is contributed by glutamate 289. 353–356 (EISS) is a binding site for ATP. Serine 388 contributes to the L-serine binding site.

It belongs to the class-II aminoacyl-tRNA synthetase family. Type-1 seryl-tRNA synthetase subfamily. As to quaternary structure, homodimer. The tRNA molecule binds across the dimer.

The protein resides in the cytoplasm. The enzyme catalyses tRNA(Ser) + L-serine + ATP = L-seryl-tRNA(Ser) + AMP + diphosphate + H(+). It catalyses the reaction tRNA(Sec) + L-serine + ATP = L-seryl-tRNA(Sec) + AMP + diphosphate + H(+). It functions in the pathway aminoacyl-tRNA biosynthesis; selenocysteinyl-tRNA(Sec) biosynthesis; L-seryl-tRNA(Sec) from L-serine and tRNA(Sec): step 1/1. Functionally, catalyzes the attachment of serine to tRNA(Ser). Is also able to aminoacylate tRNA(Sec) with serine, to form the misacylated tRNA L-seryl-tRNA(Sec), which will be further converted into selenocysteinyl-tRNA(Sec). The sequence is that of Serine--tRNA ligase from Burkholderia cenocepacia (strain HI2424).